The sequence spans 83 residues: Putative potassium channel toxin Ts20 (83 aa).

Positions Met1–Ala18 are cleaved as a signal peptide.

Post-translationally, contains 3 disulfide bonds. As to expression, expressed by the venom gland.

Its subcellular location is the secreted. Its function is as follows. Reversibly inhibits potassium channels. This is Putative potassium channel toxin Ts20 from Tityus serrulatus (Brazilian scorpion).